The following is a 325-amino-acid chain: Beta-ketoacyl-[acyl-carrier-protein] synthase III (325 aa).

Residues C119 and H252 contribute to the active site. An ACP-binding region spans residues Q253–R257. N282 is a catalytic residue.

It belongs to the thiolase-like superfamily. FabH family. Homodimer.

The protein localises to the cytoplasm. It catalyses the reaction malonyl-[ACP] + acetyl-CoA + H(+) = 3-oxobutanoyl-[ACP] + CO2 + CoA. It participates in lipid metabolism; fatty acid biosynthesis. Functionally, catalyzes the condensation reaction of fatty acid synthesis by the addition to an acyl acceptor of two carbons from malonyl-ACP. Catalyzes the first condensation reaction which initiates fatty acid synthesis and may therefore play a role in governing the total rate of fatty acid production. Possesses both acetoacetyl-ACP synthase and acetyl transacylase activities. Its substrate specificity determines the biosynthesis of branched-chain and/or straight-chain of fatty acids. In Polaromonas naphthalenivorans (strain CJ2), this protein is Beta-ketoacyl-[acyl-carrier-protein] synthase III.